The sequence spans 356 residues: Protein U8 (356 aa).

The protein belongs to the herpesviridae US22 family.

This chain is Protein U8 (U8), found in Homo sapiens (Human).